Here is a 371-residue protein sequence, read N- to C-terminus: Peptide chain release factor 2 (371 aa).

N5-methylglutamine is present on Gln247.

It belongs to the prokaryotic/mitochondrial release factor family. Methylated by PrmC. Methylation increases the termination efficiency of RF2.

It localises to the cytoplasm. Peptide chain release factor 2 directs the termination of translation in response to the peptide chain termination codons UGA and UAA. This chain is Peptide chain release factor 2, found in Caulobacter vibrioides (strain ATCC 19089 / CIP 103742 / CB 15) (Caulobacter crescentus).